The sequence spans 251 residues: CDP-diacylglycerol pyrophosphatase (251 aa).

The chain crosses the membrane as a helical span at residues 4-24; that stretch reads AGLLFLVMIVIAVVAAGIGYW.

The protein belongs to the Cdh family.

It localises to the cell inner membrane. It catalyses the reaction a CDP-1,2-diacyl-sn-glycerol + H2O = a 1,2-diacyl-sn-glycero-3-phosphate + CMP + 2 H(+). The protein operates within phospholipid metabolism; CDP-diacylglycerol degradation; phosphatidate from CDP-diacylglycerol: step 1/1. This chain is CDP-diacylglycerol pyrophosphatase, found in Shigella boydii serotype 4 (strain Sb227).